The chain runs to 486 residues: Monocarboxylate transporter 12 (486 aa).

Residues 1–9 (MTKITRVSL) lie on the Cytoplasmic side of the membrane. 12 consecutive transmembrane segments (helical) span residues 10–30 (ASPPDGGWGWMIVAGCFLVTI), 58–78 (AWIHSIVDCMTMLCAPLGSVV), 86–106 (AGIMLGGLLASTGFILGSFAT), 115–135 (LGVLTGLGFALCYSPAIAMVG), 148–168 (IAMSGSGIGTFILAPVVQLLI), 177–197 (LLILGGFVLNLCVCGALMRPI), 253–273 (FVVLAVSVLFMAYGCSPLFVY), 289–309 (AFLMSILGVIDIVGNITFGWL), 320–340 (YVCYLFAVALDGLCYLCLPML), 353–373 (FGYFDGAYVTLIPVVTAEIVG), 383–403 (VVYFLHAVPYLVSPPIAGWLV), and 410–430 (TAAFLLCGFAMIFSSILLGFV). Topologically, residues 431-486 (RIVKRMKRTQVPFPVKDSDPKLQLWTNGSVAYSVARELDQKDEEPLPKARSGCNLT) are cytoplasmic.

Belongs to the major facilitator superfamily. Monocarboxylate porter (TC 2.A.1.13) family. Interacts with isoform 2 of BSG; this interaction is required for its localization to the plasma membrane. Highly expressed in the lung, liver, kidney, and pancreas. Expressed in eye lens.

It is found in the cell membrane. The protein resides in the basolateral cell membrane. It catalyses the reaction creatine(in) = creatine(out). The enzyme catalyses guanidinoacetate(in) = guanidinoacetate(out). Creatine uptake is inhibited by carbonyl cyanide 3-chlorophenylhydrazone (CCCP) and by valinomycin. Its function is as follows. Functions as a transporter for creatine and as well for its precursor guanidinoacetate. Transport of creatine and GAA is independent of resting membrane potential and extracellular Na(+), Cl(-), or pH. Contributes to the process of creatine biosynthesis and distribution. The protein is Monocarboxylate transporter 12 of Mus musculus (Mouse).